Here is a 120-residue protein sequence, read N- to C-terminus: Large ribosomal subunit protein bL20 (120 aa).

It belongs to the bacterial ribosomal protein bL20 family.

Binds directly to 23S ribosomal RNA and is necessary for the in vitro assembly process of the 50S ribosomal subunit. It is not involved in the protein synthesizing functions of that subunit. The polypeptide is Large ribosomal subunit protein bL20 (Pseudoalteromonas translucida (strain TAC 125)).